Consider the following 94-residue polypeptide: UPF0298 protein SZO_03600 (94 aa).

The protein belongs to the UPF0298 family.

The protein resides in the cytoplasm. This is UPF0298 protein SZO_03600 from Streptococcus equi subsp. zooepidemicus (strain H70).